A 636-amino-acid polypeptide reads, in one-letter code: Methionine--tRNA ligase (636 aa).

A 'HIGH' region motif is present at residues 12–22; the sequence is YYVNGDPHVGS. Zn(2+)-binding residues include cysteine 127, cysteine 130, cysteine 145, and cysteine 148. A 'KMSKS' region motif is present at residues 298–302; sequence KMSKS. Lysine 301 contributes to the ATP binding site. Positions 535-636 constitute a tRNA-binding domain; sequence EFNKIEIKVV…KTVEAGAIVS (102 aa).

This sequence belongs to the class-I aminoacyl-tRNA synthetase family. MetG type 2A subfamily. Homodimer. Zn(2+) is required as a cofactor.

It is found in the cytoplasm. It carries out the reaction tRNA(Met) + L-methionine + ATP = L-methionyl-tRNA(Met) + AMP + diphosphate. Its function is as follows. Is required not only for elongation of protein synthesis but also for the initiation of all mRNA translation through initiator tRNA(fMet) aminoacylation. This chain is Methionine--tRNA ligase (metG), found in Fusobacterium nucleatum subsp. nucleatum (strain ATCC 25586 / DSM 15643 / BCRC 10681 / CIP 101130 / JCM 8532 / KCTC 2640 / LMG 13131 / VPI 4355).